The sequence spans 211 residues: ATP phosphoribosyltransferase (211 aa).

It belongs to the ATP phosphoribosyltransferase family. Short subfamily. Heteromultimer composed of HisG and HisZ subunits.

The protein localises to the cytoplasm. The enzyme catalyses 1-(5-phospho-beta-D-ribosyl)-ATP + diphosphate = 5-phospho-alpha-D-ribose 1-diphosphate + ATP. The protein operates within amino-acid biosynthesis; L-histidine biosynthesis; L-histidine from 5-phospho-alpha-D-ribose 1-diphosphate: step 1/9. Catalyzes the condensation of ATP and 5-phosphoribose 1-diphosphate to form N'-(5'-phosphoribosyl)-ATP (PR-ATP). Has a crucial role in the pathway because the rate of histidine biosynthesis seems to be controlled primarily by regulation of HisG enzymatic activity. The protein is ATP phosphoribosyltransferase of Pseudomonas fluorescens (strain Pf0-1).